Reading from the N-terminus, the 134-residue chain is Global transcriptional regulator Spx (134 aa).

C10 and C13 are oxidised to a cystine.

Belongs to the ArsC family. Spx subfamily. In terms of assembly, interacts with the C-terminal domain of the alpha subunit of the RNAP.

The protein localises to the cytoplasm. Its function is as follows. Global transcriptional regulator that plays a key role in stress response and exerts either positive or negative regulation of genes. Acts by interacting with the C-terminal domain of the alpha subunit of the RNA polymerase (RNAP). This interaction can enhance binding of RNAP to the promoter region of target genes and stimulate their transcription, or block interaction of RNAP with activator. The polypeptide is Global transcriptional regulator Spx (Streptococcus pyogenes serotype M6 (strain ATCC BAA-946 / MGAS10394)).